A 439-amino-acid chain; its full sequence is tRNA-2-methylthio-N(6)-dimethylallyladenosine synthase (439 aa).

Residues 1–117 (MKFYIRTFGC…IGNLVKRALN (117 aa)) form the MTTase N-terminal domain. [4Fe-4S] cluster is bound by residues cysteine 10, cysteine 46, cysteine 80, cysteine 153, cysteine 157, and cysteine 160. The region spanning 139–371 (PISKHHAWIT…MELQKRINLE (233 aa)) is the Radical SAM core domain. The 68-residue stretch at 369–436 (NLEENEKYLE…PGPLYGEVVN (68 aa)) folds into the TRAM domain.

This sequence belongs to the methylthiotransferase family. MiaB subfamily. In terms of assembly, monomer. [4Fe-4S] cluster is required as a cofactor.

Its subcellular location is the cytoplasm. It carries out the reaction N(6)-dimethylallyladenosine(37) in tRNA + (sulfur carrier)-SH + AH2 + 2 S-adenosyl-L-methionine = 2-methylsulfanyl-N(6)-dimethylallyladenosine(37) in tRNA + (sulfur carrier)-H + 5'-deoxyadenosine + L-methionine + A + S-adenosyl-L-homocysteine + 2 H(+). Functionally, catalyzes the methylthiolation of N6-(dimethylallyl)adenosine (i(6)A), leading to the formation of 2-methylthio-N6-(dimethylallyl)adenosine (ms(2)i(6)A) at position 37 in tRNAs that read codons beginning with uridine. The chain is tRNA-2-methylthio-N(6)-dimethylallyladenosine synthase from Petrotoga mobilis (strain DSM 10674 / SJ95).